A 483-amino-acid chain; its full sequence is Alpha-tubulin N-acetyltransferase (483 aa).

Residues 1–186 form the N-acetyltransferase domain; it reads MEFRFNMHPL…NNFVVYEGFF (186 aa). Residues 120 to 133 and 156 to 165 contribute to the acetyl-CoA site; these read FYVH…GLGR and SEKLLGFLQK. 3 disordered regions span residues 204-231, 330-395, and 437-472; these read TASP…QTRT, ETLP…VLGS, and SVKI…GGGH. A compositionally biased stretch (basic and acidic residues) spans 347–369; sequence YDFHPHHLELHDDTEGGGSHRDQ. Positions 370-383 are enriched in low complexity; the sequence is SLSPQSVSQQASPV.

It belongs to the acetyltransferase ATAT1 family.

It carries out the reaction L-lysyl-[alpha-tubulin] + acetyl-CoA = N(6)-acetyl-L-lysyl-[alpha-tubulin] + CoA + H(+). Its function is as follows. Specifically acetylates 'Lys-40' in alpha-tubulin on the lumenal side of microtubules. Promotes microtubule destabilization and accelerates microtubule dynamics; this activity may be independent of acetylation activity. Acetylates alpha-tubulin with a slow enzymatic rate, due to a catalytic site that is not optimized for acetyl transfer. Enters the microtubule through each end and diffuses quickly throughout the lumen of microtubules. Acetylates only long/old microtubules because of its slow acetylation rate since it does not have time to act on dynamically unstable microtubules before the enzyme is released. The protein is Alpha-tubulin N-acetyltransferase of Anopheles gambiae (African malaria mosquito).